The sequence spans 180 residues: ATP-dependent protease subunit HslV (180 aa).

T7 is an active-site residue. Na(+)-binding residues include A163, C166, and T169.

This sequence belongs to the peptidase T1B family. HslV subfamily. As to quaternary structure, a double ring-shaped homohexamer of HslV is capped on each side by a ring-shaped HslU homohexamer. The assembly of the HslU/HslV complex is dependent on binding of ATP.

Its subcellular location is the cytoplasm. The catalysed reaction is ATP-dependent cleavage of peptide bonds with broad specificity.. Allosterically activated by HslU binding. In terms of biological role, protease subunit of a proteasome-like degradation complex believed to be a general protein degrading machinery. This Cytophaga hutchinsonii (strain ATCC 33406 / DSM 1761 / CIP 103989 / NBRC 15051 / NCIMB 9469 / D465) protein is ATP-dependent protease subunit HslV.